Consider the following 480-residue polypeptide: ATP synthase subunit beta (480 aa).

Residue glycine 154–threonine 161 participates in ATP binding.

The protein belongs to the ATPase alpha/beta chains family. As to quaternary structure, F-type ATPases have 2 components, CF(1) - the catalytic core - and CF(0) - the membrane proton channel. CF(1) has five subunits: alpha(3), beta(3), gamma(1), delta(1), epsilon(1). CF(0) has four main subunits: a(1), b(1), b'(1) and c(9-12).

It is found in the cell inner membrane. It carries out the reaction ATP + H2O + 4 H(+)(in) = ADP + phosphate + 5 H(+)(out). In terms of biological role, produces ATP from ADP in the presence of a proton gradient across the membrane. The catalytic sites are hosted primarily by the beta subunits. The sequence is that of ATP synthase subunit beta from Bradyrhizobium sp. (strain ORS 278).